Reading from the N-terminus, the 523-residue chain is ATP synthase subunit beta, mitochondrial (523 aa).

The N-terminal 19 residues, 1–19 (MFSRVAKTSFSAVRAAKSQ), are a transit peptide targeting the mitochondrion. 201–208 (GGAGVGKT) provides a ligand contact to ATP.

The protein belongs to the ATPase alpha/beta chains family. In terms of assembly, F-type ATPases have 2 components, CF(1) - the catalytic core - and CF(0) - the membrane proton channel. CF(1) has five subunits: alpha(3), beta(3), gamma(1), delta(1), epsilon(1). CF(0) has three main subunits: a, b and c.

It is found in the mitochondrion. The protein resides in the mitochondrion inner membrane. It carries out the reaction ATP + H2O + 4 H(+)(in) = ADP + phosphate + 5 H(+)(out). Functionally, mitochondrial membrane ATP synthase (F(1)F(0) ATP synthase or Complex V) produces ATP from ADP in the presence of a proton gradient across the membrane which is generated by electron transport complexes of the respiratory chain. F-type ATPases consist of two structural domains, F(1) - containing the extramembraneous catalytic core, and F(0) - containing the membrane proton channel, linked together by a central stalk and a peripheral stalk. During catalysis, ATP synthesis in the catalytic domain of F(1) is coupled via a rotary mechanism of the central stalk subunits to proton translocation. Subunits alpha and beta form the catalytic core in F(1). Rotation of the central stalk against the surrounding alpha(3)beta(3) subunits leads to hydrolysis of ATP in three separate catalytic sites on the beta subunits. The polypeptide is ATP synthase subunit beta, mitochondrial (Hemicentrotus pulcherrimus (Sea urchin)).